The sequence spans 326 residues: Beta-ketoacyl-[acyl-carrier-protein] synthase III (326 aa).

Catalysis depends on residues cysteine 120 and histidine 253. The ACP-binding stretch occupies residues 254–258 (QANIR). Residue asparagine 283 is part of the active site.

The protein belongs to the thiolase-like superfamily. FabH family. As to quaternary structure, homodimer.

Its subcellular location is the cytoplasm. It carries out the reaction malonyl-[ACP] + acetyl-CoA + H(+) = 3-oxobutanoyl-[ACP] + CO2 + CoA. Its pathway is lipid metabolism; fatty acid biosynthesis. Catalyzes the condensation reaction of fatty acid synthesis by the addition to an acyl acceptor of two carbons from malonyl-ACP. Catalyzes the first condensation reaction which initiates fatty acid synthesis and may therefore play a role in governing the total rate of fatty acid production. Possesses both acetoacetyl-ACP synthase and acetyl transacylase activities. Its substrate specificity determines the biosynthesis of branched-chain and/or straight-chain of fatty acids. This Ralstonia nicotianae (strain ATCC BAA-1114 / GMI1000) (Ralstonia solanacearum) protein is Beta-ketoacyl-[acyl-carrier-protein] synthase III.